The primary structure comprises 260 residues: Endomucin (260 aa).

The first 18 residues, 1-18 (MELLQVTILFLLPSICSS), serve as a signal peptide directing secretion. N-linked (GlcNAc...) asparagine glycosylation is found at asparagine 19, asparagine 28, asparagine 97, and asparagine 103. Topologically, residues 19-189 (NSTGVLEAAN…TSATSRSYSS (171 aa)) are extracellular. 2 stretches are compositionally biased toward polar residues: residues 119–133 (QSSKPKTETQSSIKT) and 145–170 (ASPSETGTLSSIPVTIPENTSQSQVI). The interval 119–182 (QSSKPKTETQ…EGGKNASTSA (64 aa)) is disordered. 2 N-linked (GlcNAc...) asparagine glycosylation sites follow: asparagine 163 and asparagine 177. The helical transmembrane segment at 190–210 (IILPVVIALIVITLSVFVLVG) threads the bilayer. Residues 211–260 (LYRMCWKADPGTPENGNDQPQSDKESVKLLTVKTISHESGEHSAQGKTKN) are Cytoplasmic-facing. Residue serine 236 is modified to Phosphoserine.

Highly O-glycosylated. Sialic acid-rich glycoprotein.

The protein localises to the membrane. Endothelial sialomucin, also called endomucin or mucin-like sialoglycoprotein, which interferes with the assembly of focal adhesion complexes and inhibits interaction between cells and the extracellular matrix. In Pongo abelii (Sumatran orangutan), this protein is Endomucin (EMCN).